An 852-amino-acid polypeptide reads, in one-letter code: Genome polyprotein (852 aa).

2 consecutive short sequence motifs ((L)YPX(n)L motif) follow at residues 167–171 (YPHGL) and 200–205 (YPVWEL). The interval 766-836 (MMSRIAAGDL…PRKMKGLFSQ (71 aa)) is involved in P1-2A pentamerization.

The protein belongs to the picornaviridae polyprotein family. In terms of assembly, homodimer. Homomultimer; probably interacts with membranes in a multimeric form. Seems to assemble into amyloid-like fibers. As to quaternary structure, homopentamer. Homooligomer. Interacts with capsid protein VP2. Interacts with capsid protein VP3. In terms of assembly, interacts with capsid protein VP1. Interacts with capsid protein VP3. As to quaternary structure, interacts with capsid protein VP1. Interacts with capsid protein VP2. In terms of processing, specific enzymatic cleavages by viral protease in vivo yield a variety of precursors and mature proteins. Polyprotein processing intermediates are produced, such as P1-2A which is a functional precursor of the structural proteins, VP0 which is a VP4-VP2 precursor, VP1-2A precursor, 3ABC precursor which is a stable and catalytically active precursor of 3A, 3B and 3C proteins, 3AB and 3CD precursors. The assembly signal 2A is removed from VP1-2A by a host protease, possibly host Cathepsin L. This cleavage occurs over a region of 3 amino-acids probably generating VP1 proteins with heterogeneous C-termini. Post-translationally, during virion maturation, immature virions are rendered infectious following cleavage of VP0 into VP4 and VP2. This maturation seems to be an autocatalytic event triggered by the presence of RNA in the capsid and is followed by a conformational change of the particle. The assembly signal 2A is removed from VP1-2A by a host protease, possibly host Cathepsin L in naked virions. This cleavage does not occur in enveloped virions. This cleavage occurs over a region of 3 amino-acids probably generating VP1 proteins with heterogeneous C-termini. In terms of processing, viral protein genome-linked: VPg is uridylylated prior to priming replication into VPg-pUpU. Post-translationally, unlike other picornaviruses, does not seem to be myristoylated.

It localises to the virion. Its subcellular location is the host endosome. It is found in the host multivesicular body. The protein localises to the host membrane. In terms of biological role, capsid proteins VP1, VP2, and VP3 form a closed capsid enclosing the viral positive strand RNA genome. All these proteins contain a beta-sheet structure called beta-barrel jelly roll. Together they form an icosahedral capsid (T=3) composed of 60 copies of each VP1, VP2, and VP3, with a diameter of approximately 300 Angstroms. VP1 is situated at the 12 fivefold axes, whereas VP2 and VP3 are located at the quasi-sixfold axes. The naked capsid interacts with the host receptor HAVCR1 to provide virion attachment to and probably entry into the target cell. Its function is as follows. VP0 precursor is a component of the immature procapsids. Functionally, plays a role in the assembly of the 12 pentamers into an icosahedral structure. Has not been detected in mature virions, supposedly owing to its small size. Precursor component of immature procapsids that corresponds to an extended form of the structural protein VP1. After maturation, possibly by the host Cathepsin L, the assembly signal 2A is cleaved to give rise to the mature VP1 protein. In terms of biological role, affects membrane integrity and causes an increase in membrane permeability. Its function is as follows. Functions as a viroporin. Affects membrane integrity and causes an increase in membrane permeability. Involved in host intracellular membrane rearrangements probably to give rise to the viral factories. Does not disrupt calcium homeostasis or glycoprotein trafficking. Antagonizes the innate immune response of the host by suppressing IFN-beta synthesis, which it achieves by interfering with the RIG-I/IFIH1 pathway. The chain is Genome polyprotein from Cercopithecus hamlyni (Owl-faced monkey).